Consider the following 238-residue polypeptide: Ephrin-A3 (238 aa).

Positions 1–22 are cleaved as a signal peptide; it reads MAAAPLLLLLLLVPVPLLPLLA. Residues 30 to 169 enclose the Ephrin RBD domain; it reads GNRHAVYWNS…RMKVFVCCAS (140 aa). N-linked (GlcNAc...) asparagine glycans are attached at residues asparagine 38, asparagine 67, and asparagine 100. 2 cysteine pairs are disulfide-bonded: cysteine 63–cysteine 110 and cysteine 99–cysteine 158. The GPI-anchor amidated glycine moiety is linked to residue glycine 214. A propeptide spans 215–238 (removed in mature form); the sequence is TSPKREHLPLAVGIAFFLMTFLAS.

The protein belongs to the ephrin family. In terms of assembly, interacts with EPHA8; activates EPHA8. Expressed in brain, skeletal muscle, spleen, thymus, prostate, testis, ovary, small intestine, and peripheral blood leukocytes.

The protein resides in the cell membrane. Functionally, cell surface GPI-bound ligand for Eph receptors, a family of receptor tyrosine kinases which are crucial for migration, repulsion and adhesion during neuronal, vascular and epithelial development. Binds promiscuously Eph receptors residing on adjacent cells, leading to contact-dependent bidirectional signaling into neighboring cells. The signaling pathway downstream of the receptor is referred to as forward signaling while the signaling pathway downstream of the ephrin ligand is referred to as reverse signaling. In Homo sapiens (Human), this protein is Ephrin-A3 (EFNA3).